The chain runs to 382 residues: Chaperone protein DnaJ (382 aa).

Residues 4 to 69 (DYYEVLGVSR…DKRRRYDQFG (66 aa)) enclose the J domain. A CR-type zinc finger spans residues 138–219 (GVEKTIKIKK…CYGEGIKQGE (82 aa)). Zn(2+)-binding residues include C151, C154, C167, C170, C193, C196, C207, and C210. 4 CXXCXGXG motif repeats span residues 151 to 158 (CKECNGSG), 167 to 174 (CPTCHGAG), 193 to 200 (CPTCGGEG), and 207 to 214 (CPSCYGEG).

This sequence belongs to the DnaJ family. As to quaternary structure, homodimer. Zn(2+) serves as cofactor.

It localises to the cytoplasm. Functionally, participates actively in the response to hyperosmotic and heat shock by preventing the aggregation of stress-denatured proteins and by disaggregating proteins, also in an autonomous, DnaK-independent fashion. Unfolded proteins bind initially to DnaJ; upon interaction with the DnaJ-bound protein, DnaK hydrolyzes its bound ATP, resulting in the formation of a stable complex. GrpE releases ADP from DnaK; ATP binding to DnaK triggers the release of the substrate protein, thus completing the reaction cycle. Several rounds of ATP-dependent interactions between DnaJ, DnaK and GrpE are required for fully efficient folding. Also involved, together with DnaK and GrpE, in the DNA replication of plasmids through activation of initiation proteins. In Chlorobium luteolum (strain DSM 273 / BCRC 81028 / 2530) (Pelodictyon luteolum), this protein is Chaperone protein DnaJ.